The primary structure comprises 433 residues: 23S rRNA (uracil(1939)-C(5))-methyltransferase RlmD (433 aa).

One can recognise a TRAM domain in the interval Arg10–Arg68. Interaction with RNA regions lie at residues Asp23 to Phe40 and Lys58 to Arg63. Residues Cys81, Cys87, Cys90, and Cys162 each coordinate [4Fe-4S] cluster. Residues Gln265, Phe294, Asn299, Glu315, Asn342, and Asp363 each contribute to the S-adenosyl-L-methionine site. The active-site Nucleophile is the Cys389.

It belongs to the class I-like SAM-binding methyltransferase superfamily. RNA M5U methyltransferase family. RlmD subfamily.

The enzyme catalyses uridine(1939) in 23S rRNA + S-adenosyl-L-methionine = 5-methyluridine(1939) in 23S rRNA + S-adenosyl-L-homocysteine + H(+). Its function is as follows. Catalyzes the formation of 5-methyl-uridine at position 1939 (m5U1939) in 23S rRNA. This Escherichia coli (strain K12) protein is 23S rRNA (uracil(1939)-C(5))-methyltransferase RlmD.